A 449-amino-acid chain; its full sequence is Protein translocase subunit SecD (449 aa).

6 helical membrane passes run Gly-6–Thr-26, Leu-272–Tyr-292, Leu-294–Phe-314, Val-317–Val-337, Thr-379–Val-399, and Gly-401–Thr-421.

The protein belongs to the SecD/SecF family. SecD subfamily. In terms of assembly, forms a complex with SecF. Part of the essential Sec protein translocation apparatus which comprises SecA, SecYEG and auxiliary proteins SecDF. Other proteins may also be involved.

The protein resides in the cell membrane. Part of the Sec protein translocase complex. Interacts with the SecYEG preprotein conducting channel. SecDF uses the proton motive force (PMF) to complete protein translocation after the ATP-dependent function of SecA. The chain is Protein translocase subunit SecD from Dehalococcoides mccartyi (strain VS).